Consider the following 281-residue polypeptide: Probable endonuclease 4 (281 aa).

Zn(2+) is bound by residues His-67, His-107, Glu-144, Asp-178, His-181, His-215, Asp-228, His-230, and Glu-260.

It belongs to the AP endonuclease 2 family. It depends on Zn(2+) as a cofactor.

The catalysed reaction is Endonucleolytic cleavage to 5'-phosphooligonucleotide end-products.. Endonuclease IV plays a role in DNA repair. It cleaves phosphodiester bonds at apurinic or apyrimidinic (AP) sites, generating a 3'-hydroxyl group and a 5'-terminal sugar phosphate. The polypeptide is Probable endonuclease 4 (Methanocorpusculum labreanum (strain ATCC 43576 / DSM 4855 / Z)).